Reading from the N-terminus, the 459-residue chain is Cysteine--tRNA ligase (459 aa).

A Zn(2+)-binding site is contributed by Cys-31. The 'HIGH' region motif lies at Pro-33–Asn-43. Residues Cys-216, His-241, and Glu-245 each coordinate Zn(2+). A 'KMSKS' region motif is present at residues Lys-274–Ser-278. Position 277 (Lys-277) interacts with ATP.

Belongs to the class-I aminoacyl-tRNA synthetase family. In terms of assembly, monomer. Zn(2+) serves as cofactor.

The protein localises to the cytoplasm. The catalysed reaction is tRNA(Cys) + L-cysteine + ATP = L-cysteinyl-tRNA(Cys) + AMP + diphosphate. The polypeptide is Cysteine--tRNA ligase (Rickettsia felis (strain ATCC VR-1525 / URRWXCal2) (Rickettsia azadi)).